Consider the following 350-residue polypeptide: Phosphoribosylformylglycinamidine cyclo-ligase (350 aa).

The protein belongs to the AIR synthase family.

The protein localises to the cytoplasm. The enzyme catalyses 2-formamido-N(1)-(5-O-phospho-beta-D-ribosyl)acetamidine + ATP = 5-amino-1-(5-phospho-beta-D-ribosyl)imidazole + ADP + phosphate + H(+). It participates in purine metabolism; IMP biosynthesis via de novo pathway; 5-amino-1-(5-phospho-D-ribosyl)imidazole from N(2)-formyl-N(1)-(5-phospho-D-ribosyl)glycinamide: step 2/2. The chain is Phosphoribosylformylglycinamidine cyclo-ligase from Cupriavidus metallidurans (strain ATCC 43123 / DSM 2839 / NBRC 102507 / CH34) (Ralstonia metallidurans).